A 304-amino-acid polypeptide reads, in one-letter code: Gamma-gliadin B-I (304 aa).

The first 23 residues, 1–23 (MKTFLVFALIAVVATSAIAQMET), serve as a signal peptide directing secretion. The interval 32 to 92 (PWQQQPLPPQ…PFSQQQQPVL (61 aa)) is disordered. The segment covering 41-92 (QQSFSQQPPFSQQQQQPLPQQPSFSQQQPPFSQQQPILSQQPPFSQQQQPVL) has biased composition (low complexity).

This sequence belongs to the gliadin/glutenin family.

Its function is as follows. Gliadin is the major seed storage protein in wheat. This Triticum aestivum (Wheat) protein is Gamma-gliadin B-I.